We begin with the raw amino-acid sequence, 283 residues long: MIVTDKISNVRNIIKEQKLSGKKIGLVPTMGYLHEGHLSLVRIAKKHSDFVAVSIFVNPIQFGPNEDFDRYPRDLERDLKLLEKEGCDLVFAPSVEEMYPSELLTTVNVDKITEKLCGAFRPGHFKGVTTVVAKLFNIFTPDIAVFGQKDAQQVAVIKKMVEDLNFPVEIIKAPIVRESDGLAMSSRNVYLNPEERKAALILSKSLKEAEKLLLNGERNANTIIKKVNEVLNSEPLCKVQYVSCVHPDTLEDLTYIKDKALIAIACFIGTTRLIDNLLWGENI.

30-37 is an ATP binding site; sequence MGYLHEGH. His-37 acts as the Proton donor in catalysis. Gln-61 contributes to the (R)-pantoate binding site. Beta-alanine is bound at residue Gln-61. Residue 147 to 150 participates in ATP binding; it reads GQKD. Gln-153 contributes to the (R)-pantoate binding site. ATP is bound by residues Val-176 and 184-187; that span reads MSSR.

The protein belongs to the pantothenate synthetase family. As to quaternary structure, homodimer.

It localises to the cytoplasm. It catalyses the reaction (R)-pantoate + beta-alanine + ATP = (R)-pantothenate + AMP + diphosphate + H(+). It participates in cofactor biosynthesis; (R)-pantothenate biosynthesis; (R)-pantothenate from (R)-pantoate and beta-alanine: step 1/1. Functionally, catalyzes the condensation of pantoate with beta-alanine in an ATP-dependent reaction via a pantoyl-adenylate intermediate. This is Pantothenate synthetase from Thermoanaerobacter pseudethanolicus (strain ATCC 33223 / 39E) (Clostridium thermohydrosulfuricum).